The sequence spans 663 residues: Translation factor GUF1 homolog, mitochondrial (663 aa).

A tr-type G domain is found at 64-250 (EKIRNFSIIA…AVIERIPPPP (187 aa)). Residues 73–80 (AHIDHGKS), 143–147 (DTPGH), and 197–200 (NKID) contribute to the GTP site.

This sequence belongs to the TRAFAC class translation factor GTPase superfamily. Classic translation factor GTPase family. LepA subfamily.

It localises to the mitochondrion inner membrane. The catalysed reaction is GTP + H2O = GDP + phosphate + H(+). Its function is as follows. Promotes mitochondrial protein synthesis. May act as a fidelity factor of the translation reaction, by catalyzing a one-codon backward translocation of tRNAs on improperly translocated ribosomes. Binds to mitochondrial ribosomes in a GTP-dependent manner. The polypeptide is Translation factor GUF1 homolog, mitochondrial (Arabidopsis thaliana (Mouse-ear cress)).